Here is a 94-residue protein sequence, read N- to C-terminus: uncharacterized protein (94 aa).

This is an uncharacterized protein from Saccharomyces cerevisiae (strain ATCC 204508 / S288c) (Baker's yeast).